The chain runs to 484 residues: MPISDFQVVIGLEVHAQLLTASKIFCGCSTAFGGAPNAHTCPVCLGLPGALPALNRSVVEMAVRTGLALGCEIRPKSVFARKNYFYPDLPKGYQISQYELPICEGGEVTFTLDGRDHTARLVRIHMEEDAGKNVHDVAADGSSGVDLNRAGVPLVEIVSRPDLRSAEEAVEYLKALRAILMALGVNDGNMQEGSLRCDANVSVMRKGASELGTRCEIKNMNSFRFLKQAIEFEARRQVELIEAGEPVVQETRLFDPDRGETRSMRSKEEAHDYRYFPEPDLPPVIVEAALVERLRGELPELPRAKAERYQRSLGLSAQDAGNLVADAAVSAWFDAAVAAYGAGPEAAKKVANWVIGELARLANETGEAPAAWKLTPARLAAVLRLIDAGTIGGPGAKQVVEEVFRTGAEPDAVVKAKGLAQVSDEGAIEAAVDKVLAANPGEVEKYRGGRKNLVGFFVGQVMKEMRGKGNPAVVNALLRRKLGD.

The protein belongs to the GatB/GatE family. GatB subfamily. In terms of assembly, heterotrimer of A, B and C subunits.

The catalysed reaction is L-glutamyl-tRNA(Gln) + L-glutamine + ATP + H2O = L-glutaminyl-tRNA(Gln) + L-glutamate + ADP + phosphate + H(+). The enzyme catalyses L-aspartyl-tRNA(Asn) + L-glutamine + ATP + H2O = L-asparaginyl-tRNA(Asn) + L-glutamate + ADP + phosphate + 2 H(+). Functionally, allows the formation of correctly charged Asn-tRNA(Asn) or Gln-tRNA(Gln) through the transamidation of misacylated Asp-tRNA(Asn) or Glu-tRNA(Gln) in organisms which lack either or both of asparaginyl-tRNA or glutaminyl-tRNA synthetases. The reaction takes place in the presence of glutamine and ATP through an activated phospho-Asp-tRNA(Asn) or phospho-Glu-tRNA(Gln). The chain is Aspartyl/glutamyl-tRNA(Asn/Gln) amidotransferase subunit B from Anaeromyxobacter dehalogenans (strain 2CP-C).